A 342-amino-acid chain; its full sequence is HPr kinase/phosphorylase (342 aa).

Catalysis depends on residues H153 and K174. G168–S175 is a binding site for ATP. S175 is a Mg(2+) binding site. D192 functions as the Proton acceptor; for phosphorylation activity. Proton donor; for dephosphorylation activity in the catalytic mechanism. Residues M217–D226 are important for the catalytic mechanism of both phosphorylation and dephosphorylation. Residue E218 participates in Mg(2+) binding. The active site involves R259. Residues P280–K285 form an important for the catalytic mechanism of dephosphorylation region.

It belongs to the HPrK/P family. As to quaternary structure, homohexamer. Requires Mg(2+) as cofactor.

It carries out the reaction [HPr protein]-L-serine + ATP = [HPr protein]-O-phospho-L-serine + ADP + H(+). The catalysed reaction is [HPr protein]-O-phospho-L-serine + phosphate + H(+) = [HPr protein]-L-serine + diphosphate. In terms of biological role, catalyzes the ATP- as well as the pyrophosphate-dependent phosphorylation of a specific serine residue in HPr, a phosphocarrier protein of the phosphoenolpyruvate-dependent sugar phosphotransferase system (PTS). HprK/P also catalyzes the pyrophosphate-producing, inorganic phosphate-dependent dephosphorylation (phosphorolysis) of seryl-phosphorylated HPr (P-Ser-HPr). The polypeptide is HPr kinase/phosphorylase (Chlorobaculum tepidum (strain ATCC 49652 / DSM 12025 / NBRC 103806 / TLS) (Chlorobium tepidum)).